Consider the following 240-residue polypeptide: Small ribosomal subunit protein uS3m (240 aa).

Belongs to the universal ribosomal protein uS3 family.

The protein resides in the mitochondrion. The polypeptide is Small ribosomal subunit protein uS3m (RPS3) (Chondrus crispus (Carrageen Irish moss)).